The sequence spans 66 residues: MMSKLGALLTICLLLFPLTAVPLDGDQPLDRHAERMHDGISPKRHPWFDPVKRCCKVQCESCTPCC.

An N-terminal signal peptide occupies residues 1-20 (MMSKLGALLTICLLLFPLTA). A propeptide spanning residues 21–53 (VPLDGDQPLDRHAERMHDGISPKRHPWFDPVKR) is cleaved from the precursor. Cystine bridges form between Cys54-Cys66, Cys55-Cys62, and Cys59-Cys65. Pro64 carries the post-translational modification 4-hydroxyproline.

The protein belongs to the conotoxin M superfamily. In terms of tissue distribution, expressed by the venom duct.

It localises to the secreted. This is Conotoxin Lt3.5 from Conus litteratus (Lettered cone).